Reading from the N-terminus, the 261-residue chain is MLPISYTNLNSSRITRDGTASSASRYRRLIPEYFRRIFHYPQMDIEYTFWIMFYLCFNPSRVYRVTSWHKQTKNQWARDDPAFAVILVFFMAIASMSYAITFHFLSFLNVIKVMFWAVFVDFITVGLLIATIGWWVTNKFLRVSVHNHSVDQSVEWLYAFDIHCNSFFPLFIILYVVQFFLLPILLSNSLFAAILSNTLYIIGFSYYYYVTFLGYNALPFLQHTVVFLYPIGILFALYIVSVVMGKNLTVSIINFYFGFQL.

Transmembrane regions (helical) follow at residues 37–57 (IFHY…YLCF), 82–102 (AFAV…AITF), 113–133 (VMFW…ATIG), 166–186 (SFFP…PILL), 190–210 (LFAA…YYYV), and 225–245 (VVFL…VVMG).

Belongs to the unc-50 family.

Its subcellular location is the membrane. The protein is Protein unc-50 homolog of Dictyostelium discoideum (Social amoeba).